The following is a 356-amino-acid chain: Epoxide hydrolase B (356 aa).

In terms of domain architecture, AB hydrolase-1 spans Pro-28 to Val-129. Residue Asp-104 is the Nucleophile of the active site. His-333 acts as the Proton acceptor in catalysis.

It belongs to the AB hydrolase superfamily. Epoxide hydrolase family. Homodimer.

The enzyme catalyses an epoxide + H2O = an ethanediol. In terms of biological role, could be involved in detoxification of extraneous host-cell epoxides. Catalyzes the hydrolysis of small aromatic epoxide-containing substrates such as trans-1,3-diphenylpropene oxide, trans and cis-stilbene oxide, and terpenoid epoxide. This Mycobacterium tuberculosis (strain CDC 1551 / Oshkosh) protein is Epoxide hydrolase B.